Consider the following 423-residue polypeptide: CinA-like protein (423 aa).

It belongs to the CinA family.

The chain is CinA-like protein from Chlorobium phaeobacteroides (strain DSM 266 / SMG 266 / 2430).